We begin with the raw amino-acid sequence, 306 residues long: Prophage bactoprenol glucosyl transferase homolog (306 aa).

Topologically, residues 1–227 (MKISLVVPVF…ITSFSTFPLR (227 aa)) are cytoplasmic. A helical transmembrane segment spans residues 228-248 (IWTYIGLVVASVAFIYGAWMI). The Periplasmic portion of the chain corresponds to 249–262 (LDTIIFGNAVRGYP). The helical transmembrane segment at 263–283 (SLLVSILFLGGIQMIGIGVLG) threads the bilayer. At 284 to 306 (EYIGRTYIETKKRPKYIIKRVKK) the chain is on the cytoplasmic side.

It belongs to the glycosyltransferase 2 family. GtrB subfamily.

Its subcellular location is the cell inner membrane. Involved in O antigen modification. Catalyzes the transfer of the glucose residue from UDP-glucose to a lipid carrier. In Escherichia coli (strain K12), this protein is Prophage bactoprenol glucosyl transferase homolog (yfdH).